A 428-amino-acid polypeptide reads, in one-letter code: Trigger factor (428 aa).

The PPIase FKBP-type domain maps to 163–248 (GDMVIIDYKG…IHEIKEKEVP (86 aa)).

This sequence belongs to the FKBP-type PPIase family. Tig subfamily.

It is found in the cytoplasm. It catalyses the reaction [protein]-peptidylproline (omega=180) = [protein]-peptidylproline (omega=0). Functionally, involved in protein export. Acts as a chaperone by maintaining the newly synthesized protein in an open conformation. Functions as a peptidyl-prolyl cis-trans isomerase. The polypeptide is Trigger factor (Alkaliphilus oremlandii (strain OhILAs) (Clostridium oremlandii (strain OhILAs))).